The sequence spans 284 residues: Proton-translocating ferredoxin:NAD(+) oxidoreductase complex subunit B (284 aa).

A hydrophobic region spans residues 1-26; that stretch reads MNTVIMILVVMTIIGLIFGLVLAYVN. Positions 32–92 constitute a 4Fe-4S domain; that stretch reads EVNPLVDLVE…AEQVAKLTGK (61 aa). 20 residues coordinate [4Fe-4S] cluster: Cys-49, Cys-52, Cys-57, Cys-75, Cys-138, Cys-142, Cys-148, Cys-152, Cys-172, Cys-175, Cys-178, Cys-182, Cys-217, Cys-220, Cys-223, Cys-227, Cys-246, Cys-249, Cys-254, and Cys-258. 4Fe-4S ferredoxin-type domains lie at 133 to 162, 163 to 192, 206 to 237, and 239 to 269; these read GGPKACKYGCLGFGTCVKSCPFGAMAMGSN, GLPIIDTDICTGCGTCVSACPKQVLGFRPV, GGAVRKACSVGCLGCGLCAKNCPNDAIKVENN, and AVVDQSICASCSEATCLAKCPTGAIKAIVSG.

Belongs to the 4Fe4S bacterial-type ferredoxin family. RnfB subfamily. In terms of assembly, the complex is composed of six subunits: RnfA, RnfB, RnfC, RnfD, RnfE and RnfG. [4Fe-4S] cluster serves as cofactor.

The protein localises to the cell membrane. Part of a membrane-bound complex that couples electron transfer with translocation of ions across the membrane. Couples electron transfer from reduced ferredoxin to NAD(+) with translocation of H(+) out of the cell. Essential for energy conservation during autotrophic growth. Contributes to ATP synthesis during heterotrophic growth. This Clostridium ljungdahlii (strain ATCC 55383 / DSM 13528 / PETC) protein is Proton-translocating ferredoxin:NAD(+) oxidoreductase complex subunit B.